Here is a 297-residue protein sequence, read N- to C-terminus: uncharacterized protein (297 aa).

Positions 46–229 (LGAGGPPPPP…RPPPYIAPPP (184 aa)) are disordered. Positions 65-81 (PEGPGGPPQHAPPNPPP) are enriched in pro residues. Gly residues predominate over residues 90–100 (RGGGAGGAGDG). Acidic residues predominate over residues 106 to 117 (DAAEEYGPEDLD). Positions 137 to 151 (HQTRGPGRRAKKRLR) are enriched in basic residues. The segment covering 184 to 201 (ATPQAAPAAKTTPASPQT) has biased composition (low complexity). Residues 219–229 (HRPPPYIAPPP) show a composition bias toward pro residues.

This is an uncharacterized protein from Torque teno virus (isolate Human/China/CT23F/2001) (TTV).